The following is a 147-amino-acid chain: Small ribosomal subunit protein uS12 (147 aa).

Belongs to the universal ribosomal protein uS12 family. Part of the 30S ribosomal subunit.

Its function is as follows. With S4 and S5 plays an important role in translational accuracy. Located at the interface of the 30S and 50S subunits. The protein is Small ribosomal subunit protein uS12 of Methanococcus maripaludis (strain DSM 14266 / JCM 13030 / NBRC 101832 / S2 / LL).